We begin with the raw amino-acid sequence, 31 residues long: Cyclotide glopa C (31 aa).

Positions 1-31 (GDLPICGETCFEGGNCRIPGCTCVWPFCSKN) form a cross-link, cyclopeptide (Gly-Asn). Intrachain disulfides connect Cys6–Cys21, Cys10–Cys23, and Cys16–Cys28.

This is a cyclic peptide.

Probably participates in a plant defense mechanism. The sequence is that of Cyclotide glopa C from Gloeospermum pauciflorum.